The primary structure comprises 531 residues: Sop-2-related protein 3 (531 aa).

Expressed ubiquitously.

The protein localises to the cytoplasm. The protein resides in the nucleus. In terms of biological role, probably acts synergistically with sop-2 to maintain the transcriptionally repressive state of homeotic genes in order to regulate various neurogenic identities. Specification of some neuronal identities also involves expression of non-Hox genes. Specifies dopaminergic and serotonergic neuronal cell fate, and regulates neurotransmitter choice and axon pathfinding. This is Sop-2-related protein 3 (sor-3) from Caenorhabditis elegans.